We begin with the raw amino-acid sequence, 373 residues long: Anhydro-N-acetylmuramic acid kinase (373 aa).

Residue 12 to 19 (GTSLDGVD) participates in ATP binding.

The protein belongs to the anhydro-N-acetylmuramic acid kinase family.

It carries out the reaction 1,6-anhydro-N-acetyl-beta-muramate + ATP + H2O = N-acetyl-D-muramate 6-phosphate + ADP + H(+). It participates in amino-sugar metabolism; 1,6-anhydro-N-acetylmuramate degradation. The protein operates within cell wall biogenesis; peptidoglycan recycling. In terms of biological role, catalyzes the specific phosphorylation of 1,6-anhydro-N-acetylmuramic acid (anhMurNAc) with the simultaneous cleavage of the 1,6-anhydro ring, generating MurNAc-6-P. Is required for the utilization of anhMurNAc either imported from the medium or derived from its own cell wall murein, and thus plays a role in cell wall recycling. This Salmonella paratyphi A (strain ATCC 9150 / SARB42) protein is Anhydro-N-acetylmuramic acid kinase.